The primary structure comprises 656 residues: ATP-dependent zinc metalloprotease FtsH (656 aa).

At 1–10 (MGDNRWLKNS) the chain is on the cytoplasmic side. The chain crosses the membrane as a helical span at residues 11 to 31 (FVYLIILVAALALFFQYLGPG). At 32–116 (ASQTEEKGIA…IVQPAPAWGG (85 aa)) the chain is on the extracellular side. Residues 117–137 (LLSIFTILLPTLLLIGFFVFF) traverse the membrane as a helical segment. Over 138–656 (MRQAQGSNNQ…GLGGPSPLPA (519 aa)) the chain is Cytoplasmic. 209–216 (GPPGTGKT) contacts ATP. His432 contacts Zn(2+). Glu433 is a catalytic residue. 2 residues coordinate Zn(2+): His436 and Asp511. Residues 622 to 632 (FSKSGSTTPNG) are compositionally biased toward polar residues. Residues 622 to 656 (FSKSGSTTPNGRTEDRPAQPDAPQMGLGGPSPLPA) form a disordered region.

In the central section; belongs to the AAA ATPase family. This sequence in the C-terminal section; belongs to the peptidase M41 family. In terms of assembly, homohexamer. It depends on Zn(2+) as a cofactor.

The protein resides in the cell membrane. Its function is as follows. Acts as a processive, ATP-dependent zinc metallopeptidase for both cytoplasmic and membrane proteins. Plays a role in the quality control of integral membrane proteins. The polypeptide is ATP-dependent zinc metalloprotease FtsH (Chloroflexus aggregans (strain MD-66 / DSM 9485)).